The chain runs to 371 residues: N-acetyllactosaminide alpha-2,3-sialyltransferase (371 aa).

CMP-N-acetyl-beta-neuraminate is bound at residue Gly-255. Asp-258 functions as the Proton acceptor in the catalytic mechanism. CMP-N-acetyl-beta-neuraminate contacts are provided by residues 278–282 (APHPR), 299–300 (IE), and 322–323 (SG). His-280 (proton donor) is an active-site residue.

This sequence belongs to the glycosyltransferase 52 family. In terms of assembly, homodimer.

The protein resides in the cell outer membrane. The enzyme catalyses a beta-D-galactosyl-(1-&gt;4)-N-acetyl-beta-D-glucosaminyl derivative + CMP-N-acetyl-beta-neuraminate = an N-acetyl-alpha-neuraminyl-(2-&gt;3)-beta-D-galactosyl-(1-&gt;4)-N-acetyl-beta-D-glucosaminyl derivative + CMP + H(+). Its pathway is bacterial outer membrane biogenesis; lipooligosaccharide biosynthesis. In terms of biological role, catalyzes the transfer of sialic acid from the substrate CMP-N-acetylneuraminate to the terminal galactose residue of the lacto-N-neotetraose branch of surface lipooligosaccharide (LOS), forming an alpha-2,3-sialyl linkage. Thus, functions in the sialylation of LOS, which plays a role in the evasion of the host immune response by protecting N.meningitidis from complement-mediated serum killing and from phagocytic killing by neutrophils. This Neisseria meningitidis serogroup A / serotype 4A (strain DSM 15465 / Z2491) protein is N-acetyllactosaminide alpha-2,3-sialyltransferase.